The following is an 872-amino-acid chain: HTH-type transcriptional regulator AlkS (872 aa).

Positions 805–870 constitute an HTH luxR-type domain; it reads LTNTQSTITI…RAVSEARLRG (66 aa). Residues 829-848 constitute a DNA-binding region (H-T-H motif); it reads NKEIAERLLITEDTVKWHLK.

The protein operates within hydrocarbon metabolism; alkane degradation. In terms of biological role, this protein activates the expression of AlkB1 in the presence of alkanes. This is HTH-type transcriptional regulator AlkS (alkS) from Alcanivorax borkumensis (strain ATCC 700651 / DSM 11573 / NCIMB 13689 / SK2).